The following is a 230-amino-acid chain: 2,3-bisphosphoglycerate-dependent phosphoglycerate mutase (230 aa).

Residues 8-15, 21-22, arginine 60, 87-90, lysine 98, 114-115, and 183-184 contribute to the substrate site; these read RHGESEWN, TG, ERHY, RR, and GN. Histidine 9 functions as the Tele-phosphohistidine intermediate in the catalytic mechanism. Glutamate 87 acts as the Proton donor/acceptor in catalysis.

It belongs to the phosphoglycerate mutase family. BPG-dependent PGAM subfamily.

It carries out the reaction (2R)-2-phosphoglycerate = (2R)-3-phosphoglycerate. It participates in carbohydrate degradation; glycolysis; pyruvate from D-glyceraldehyde 3-phosphate: step 3/5. Functionally, catalyzes the interconversion of 2-phosphoglycerate and 3-phosphoglycerate. The protein is 2,3-bisphosphoglycerate-dependent phosphoglycerate mutase of Streptococcus mutans serotype c (strain ATCC 700610 / UA159).